The sequence spans 407 residues: Peptidase T (407 aa).

Histidine 81 provides a ligand contact to Zn(2+). Residue aspartate 83 is part of the active site. Position 142 (aspartate 142) interacts with Zn(2+). Glutamate 176 functions as the Proton acceptor in the catalytic mechanism. Residues glutamate 177, aspartate 199, and histidine 381 each contribute to the Zn(2+) site.

The protein belongs to the peptidase M20B family. Zn(2+) serves as cofactor.

It localises to the cytoplasm. The catalysed reaction is Release of the N-terminal residue from a tripeptide.. Functionally, cleaves the N-terminal amino acid of tripeptides. In Streptococcus pneumoniae (strain Hungary19A-6), this protein is Peptidase T.